We begin with the raw amino-acid sequence, 285 residues long: Diaminopimelate epimerase (285 aa).

Positions 11 and 62 each coordinate substrate. Cysteine 71 serves as the catalytic Proton donor. Residues 72–73, asparagine 167, asparagine 200, and 218–219 each bind substrate; these read GN and ER. Cysteine 227 (proton acceptor) is an active-site residue. 228 to 229 serves as a coordination point for substrate; the sequence is GT.

Belongs to the diaminopimelate epimerase family. Homodimer.

It localises to the cytoplasm. The enzyme catalyses (2S,6S)-2,6-diaminopimelate = meso-2,6-diaminopimelate. Its pathway is amino-acid biosynthesis; L-lysine biosynthesis via DAP pathway; DL-2,6-diaminopimelate from LL-2,6-diaminopimelate: step 1/1. In terms of biological role, catalyzes the stereoinversion of LL-2,6-diaminopimelate (L,L-DAP) to meso-diaminopimelate (meso-DAP), a precursor of L-lysine and an essential component of the bacterial peptidoglycan. This Agathobacter rectalis (strain ATCC 33656 / DSM 3377 / JCM 17463 / KCTC 5835 / VPI 0990) (Eubacterium rectale) protein is Diaminopimelate epimerase.